The following is a 172-amino-acid chain: Peptide methionine sulfoxide reductase MsrA 1 (172 aa).

The active site involves Cys14.

The protein belongs to the MsrA Met sulfoxide reductase family.

It carries out the reaction L-methionyl-[protein] + [thioredoxin]-disulfide + H2O = L-methionyl-(S)-S-oxide-[protein] + [thioredoxin]-dithiol. The enzyme catalyses [thioredoxin]-disulfide + L-methionine + H2O = L-methionine (S)-S-oxide + [thioredoxin]-dithiol. Functionally, has an important function as a repair enzyme for proteins that have been inactivated by oxidation. Catalyzes the reversible oxidation-reduction of methionine sulfoxide in proteins to methionine. The chain is Peptide methionine sulfoxide reductase MsrA 1 (msrA1) from Mesorhizobium japonicum (strain LMG 29417 / CECT 9101 / MAFF 303099) (Mesorhizobium loti (strain MAFF 303099)).